We begin with the raw amino-acid sequence, 103 residues long: Large ribosomal subunit protein bL21 (103 aa).

Belongs to the bacterial ribosomal protein bL21 family. Part of the 50S ribosomal subunit. Contacts protein L20.

Its function is as follows. This protein binds to 23S rRNA in the presence of protein L20. In Desulforapulum autotrophicum (strain ATCC 43914 / DSM 3382 / VKM B-1955 / HRM2) (Desulfobacterium autotrophicum), this protein is Large ribosomal subunit protein bL21.